The primary structure comprises 182 residues: Peptidyl-prolyl cis-trans isomerase C, mitochondrial (182 aa).

A mitochondrion-targeting transit peptide spans 1–20 (MFKRSIIQQSRLFSNSASRL). Residues 25–181 (FFDPAVNGTK…AEIVIEEAGE (157 aa)) form the PPIase cyclophilin-type domain.

Belongs to the cyclophilin-type PPIase family.

It localises to the mitochondrion matrix. The enzyme catalyses [protein]-peptidylproline (omega=180) = [protein]-peptidylproline (omega=0). Inhibited by the immunosuppressant drug cyclosporin A and by SDZ NIM811, a PPIase inhibitor. PPIases accelerate the folding of proteins. It catalyzes the cis-trans isomerization of proline imidic peptide bonds in oligopeptides. This isozyme is required for growth on lactate at high temperature. This Saccharomyces cerevisiae (strain ATCC 204508 / S288c) (Baker's yeast) protein is Peptidyl-prolyl cis-trans isomerase C, mitochondrial (CPR3).